The sequence spans 216 residues: [5-(aminomethyl)furan-3-yl]methyl phosphate kinase (216 aa).

ATP-binding positions include 5–9 (KIGGS), Gly-39, Asp-142, 147–152 (YDKFPG), and Gly-166.

The protein belongs to the MfnE family. As to quaternary structure, homotrimer. Requires Mg(2+) as cofactor.

It catalyses the reaction [5-(aminomethyl)-3-furyl]methyl phosphate + ATP = [5-(aminomethyl)furan-3-yl]methyl diphosphate + ADP. The protein operates within cofactor biosynthesis; methanofuran biosynthesis. Its activity is regulated as follows. Inhibited by EDTA. Catalyzes the formation of 5-(aminomethyl)-3-furanmethanol diphosphate (F1-PP) from 5-(aminomethyl)-3-furanmethanol phosphate (F1-P) and ATP. In vitro, can also act as an adenylate kinase that catalyzes the transfer of a phosphoryl group from ATP to AMP, generating two molecules of ADP. This is [5-(aminomethyl)furan-3-yl]methyl phosphate kinase from Methanocaldococcus jannaschii (strain ATCC 43067 / DSM 2661 / JAL-1 / JCM 10045 / NBRC 100440) (Methanococcus jannaschii).